A 137-amino-acid polypeptide reads, in one-letter code: DNA-binding protein H-NS (137 aa).

Positions 13–65 (TLRAQARECTLETLEEMLEKLEVVVNERREEESAAAAEVEERTRKLQQYREML) form a coiled coil. A DNA-binding region spans residues 112–117 (QGRTPA).

Belongs to the histone-like protein H-NS family. In terms of assembly, homodimer that oligomerizes on DNA into higher-order complexes that form bridges between disparate regions of DNA compacting it. Interacts with Hha, YdgT and StpA.

It localises to the cytoplasm. The protein localises to the nucleoid. In terms of biological role, a DNA-binding protein implicated in transcriptional repression and chromosome organization and compaction. Binds AT-rich DNA, repressing its transcription; about 754/4438 tested genes (15%) bind to H-NS, 70% of these are AT-rich and correspond to horizontally transferred geness (HTG), thus playing a central role in silencing foreign genes. This offers the selective advantage of silencing foreign DNA. Binds nucleation sites in AT-rich DNA and bridges them, forming higher-order nucleoprotein complexes and condensing the chromosome. A subset of genes are repressed by H-NS in association with Hha and/or YdgT. This is DNA-binding protein H-NS (hns) from Salmonella typhimurium (strain 14028s / SGSC 2262).